The primary structure comprises 328 residues: Gonadotropin-releasing hormone receptor (328 aa).

The Extracellular portion of the chain corresponds to 1-38; the sequence is MANSDSPEQNENHCSAINSSIPLTPGSLPTLTLSGKIR. N-linked (GlcNAc...) asparagine glycosylation is present at Asn-18. A helical membrane pass occupies residues 39–58; the sequence is VTVTFFLFLLSTIFNTSFLL. Residues 59-77 are Cytoplasmic-facing; the sequence is KLQNWTQRKEKRKKLSRMK. Residues 78–97 form a helical membrane-spanning segment; that stretch reads LLLKHLTLANLLETLIVMPL. The Extracellular segment spans residues 98–115; that stretch reads DGMWNITVQWYAGELLCK. Asn-102 carries N-linked (GlcNAc...) asparagine glycosylation. Cys-114 and Cys-196 form a disulfide bridge. A helical membrane pass occupies residues 116-137; sequence VLSYLKLFSMYAPAFMMVVISL. The Cytoplasmic segment spans residues 138 to 164; that stretch reads DRSLAITKPLAVKSNSKLGQFMIGLAW. Residues 165–184 traverse the membrane as a helical segment; it reads LLSSIFAGPQLYIFGMIHLA. Over 185–212 the chain is Extracellular; that stretch reads DDSGQTEGFSQCVTHCSFPQWWHQAFYN. The helical transmembrane segment at 213–232 threads the bilayer; that stretch reads FFTFSCLFIIPLLIMVICNA. Topologically, residues 233–281 are cytoplasmic; the sequence is KIIFTLTRVLHQDPHKLQLNQSKNNIPRARLRTLKMTVAFATSFTVCWT. A helical membrane pass occupies residues 282-300; that stretch reads PYYVLGIWYWFDPDMVNRV. Topologically, residues 301–306 are extracellular; the sequence is SDPVNH. The chain crosses the membrane as a helical span at residues 307 to 326; sequence FFFLFAFLNPCFDPLIYGYF. Over 327-328 the chain is Cytoplasmic; it reads SL.

This sequence belongs to the G-protein coupled receptor 1 family.

The protein resides in the cell membrane. Its function is as follows. Receptor for gonadotropin releasing hormone (GnRH) that mediates the action of GnRH to stimulate the secretion of the gonadotropic hormones luteinizing hormone (LH) and follicle-stimulating hormone (FSH). This receptor mediates its action by association with G-proteins that activate a phosphatidylinositol-calcium second messenger system. The polypeptide is Gonadotropin-releasing hormone receptor (GNRHR) (Bos taurus (Bovine)).